The following is a 350-amino-acid chain: Kelch domain-containing protein 9 (350 aa).

Kelch repeat units follow at residues 39–89, 91–137, and 325–350; these read RFYL…LVGG, WLCV…SHTC, and QLYLVGGFGEDGRTASPQVCILEFFI.

Interacts with CCNA1.

In Mus musculus (Mouse), this protein is Kelch domain-containing protein 9 (Klhdc9).